A 186-amino-acid chain; its full sequence is Tumor necrosis factor alpha-induced protein 8-like protein 2 (186 aa).

It belongs to the TNFAIP8 family. TNFAIP8L2 subfamily.

Functionally, acts as a negative regulator of innate and adaptive immunity by maintaining immune homeostasis. Negative regulator of Toll-like receptor and T-cell receptor function. Prevents hyperresponsiveness of the immune system and maintains immune homeostasis. Inhibits jun/ap1 and NF-kappa-B activation. Promotes Fas-induced apoptosis. The protein is Tumor necrosis factor alpha-induced protein 8-like protein 2 (tnfaip8l2) of Xenopus laevis (African clawed frog).